A 52-amino-acid chain; its full sequence is uncharacterized protein (52 aa).

This is an uncharacterized protein from Thermoproteus tenax (TTV1).